An 893-amino-acid chain; its full sequence is Translation initiation factor IF-2 (893 aa).

Disordered stretches follow at residues 51-203 (KEHG…AEAE) and 216-300 (EENE…SMQH). 3 stretches are compositionally biased toward basic and acidic residues: residues 102-203 (ALEE…AEAE), 216-238 (EENEARWKEEEQKKSAAEKDADY), and 245-261 (HAREAEDAADRKEEQQP). A tr-type G domain is found at 392 to 561 (GRAPVVTIMG…LLQSEVLELT (170 aa)). Residues 401–408 (GHVDHGKT) are G1. Residue 401–408 (GHVDHGKT) coordinates GTP. The segment at 426–430 (GITQH) is G2. Positions 447–450 (DTPG) are G3. Residues 447 to 451 (DTPGH) and 501 to 504 (NKID) contribute to the GTP site. Residues 501–504 (NKID) are G4. The tract at residues 537-539 (SAK) is G5.

This sequence belongs to the TRAFAC class translation factor GTPase superfamily. Classic translation factor GTPase family. IF-2 subfamily.

It is found in the cytoplasm. Functionally, one of the essential components for the initiation of protein synthesis. Protects formylmethionyl-tRNA from spontaneous hydrolysis and promotes its binding to the 30S ribosomal subunits. Also involved in the hydrolysis of GTP during the formation of the 70S ribosomal complex. This Aliivibrio fischeri (strain MJ11) (Vibrio fischeri) protein is Translation initiation factor IF-2.